A 347-amino-acid polypeptide reads, in one-letter code: NADH-ubiquinone oxidoreductase chain 2 (347 aa).

Helical transmembrane passes span 2 to 22 (SPYV…MTLI), 25 to 45 (HWLT…PLMT), 56 to 76 (AIKY…SAIF), 96 to 116 (FMMT…FWVP), 122 to 142 (IPLL…ISIF), 149 to 169 (LNMS…GWGG), 178 to 197 (ILAY…IMIY), 202 to 219 (ILNL…FMVL), 241 to 261 (MIII…TGFM), 278 to 298 (LAMM…RIIY), and 323 to 343 (ILPI…TPMF).

Belongs to the complex I subunit 2 family. Core subunit of respiratory chain NADH dehydrogenase (Complex I) which is composed of 45 different subunits. Interacts with TMEM242.

The protein localises to the mitochondrion inner membrane. The enzyme catalyses a ubiquinone + NADH + 5 H(+)(in) = a ubiquinol + NAD(+) + 4 H(+)(out). In terms of biological role, core subunit of the mitochondrial membrane respiratory chain NADH dehydrogenase (Complex I) which catalyzes electron transfer from NADH through the respiratory chain, using ubiquinone as an electron acceptor. Essential for the catalytic activity and assembly of complex I. The chain is NADH-ubiquinone oxidoreductase chain 2 from Metachirus nudicaudatus (Brown four-eyed opossum).